Here is a 189-residue protein sequence, read N- to C-terminus: Large ribosomal subunit protein uL6 (189 aa).

It belongs to the universal ribosomal protein uL6 family. In terms of assembly, part of the 50S ribosomal subunit.

In terms of biological role, this protein binds to the 23S rRNA, and is important in its secondary structure. It is located near the subunit interface in the base of the L7/L12 stalk, and near the tRNA binding site of the peptidyltransferase center. The sequence is that of Large ribosomal subunit protein uL6 from Bacteroides fragilis (strain ATCC 25285 / DSM 2151 / CCUG 4856 / JCM 11019 / LMG 10263 / NCTC 9343 / Onslow / VPI 2553 / EN-2).